A 120-amino-acid polypeptide reads, in one-letter code: NAD(P)H-quinone oxidoreductase subunit 3 (120 aa).

3 consecutive transmembrane segments (helical) span residues 10–30 (FLGFLLIAAAVPILALVTNLI), 64–84 (MFALVFVIFDVETVFLYPWAV), and 89–109 (LGLLAFIEALIFIAILVIALA).

The protein belongs to the complex I subunit 3 family. In terms of assembly, NDH-1 can be composed of about 15 different subunits; different subcomplexes with different compositions have been identified which probably have different functions.

It is found in the cellular thylakoid membrane. It carries out the reaction a plastoquinone + NADH + (n+1) H(+)(in) = a plastoquinol + NAD(+) + n H(+)(out). The catalysed reaction is a plastoquinone + NADPH + (n+1) H(+)(in) = a plastoquinol + NADP(+) + n H(+)(out). In terms of biological role, NDH-1 shuttles electrons from an unknown electron donor, via FMN and iron-sulfur (Fe-S) centers, to quinones in the respiratory and/or the photosynthetic chain. The immediate electron acceptor for the enzyme in this species is believed to be plastoquinone. Couples the redox reaction to proton translocation, and thus conserves the redox energy in a proton gradient. Cyanobacterial NDH-1 also plays a role in inorganic carbon-concentration. This is NAD(P)H-quinone oxidoreductase subunit 3 from Prochlorococcus marinus (strain MIT 9312).